The primary structure comprises 380 residues: Tetraacyldisaccharide 4'-kinase (380 aa).

51-58 (SVGGTGKT) is a binding site for ATP.

Belongs to the LpxK family.

The catalysed reaction is a lipid A disaccharide + ATP = a lipid IVA + ADP + H(+). It functions in the pathway glycolipid biosynthesis; lipid IV(A) biosynthesis; lipid IV(A) from (3R)-3-hydroxytetradecanoyl-[acyl-carrier-protein] and UDP-N-acetyl-alpha-D-glucosamine: step 6/6. Transfers the gamma-phosphate of ATP to the 4'-position of a tetraacyldisaccharide 1-phosphate intermediate (termed DS-1-P) to form tetraacyldisaccharide 1,4'-bis-phosphate (lipid IVA). The protein is Tetraacyldisaccharide 4'-kinase of Bacteroides thetaiotaomicron (strain ATCC 29148 / DSM 2079 / JCM 5827 / CCUG 10774 / NCTC 10582 / VPI-5482 / E50).